Here is a 520-residue protein sequence, read N- to C-terminus: GMP synthase [glutamine-hydrolyzing] (520 aa).

Residues 9-202 (SVLIIDFGSQ…VHNIAGITGD (194 aa)) enclose the Glutamine amidotransferase type-1 domain. Residue cysteine 86 is the Nucleophile of the active site. Active-site residues include histidine 176 and glutamate 178. Residues 203-395 (WSMSAYRAKA…LGLPDSFIGR (193 aa)) enclose the GMPS ATP-PPase domain. 230–236 (SGGVDSS) contributes to the ATP binding site.

Homodimer.

The catalysed reaction is XMP + L-glutamine + ATP + H2O = GMP + L-glutamate + AMP + diphosphate + 2 H(+). The protein operates within purine metabolism; GMP biosynthesis; GMP from XMP (L-Gln route): step 1/1. Its function is as follows. Catalyzes the synthesis of GMP from XMP. In Allorhizobium ampelinum (strain ATCC BAA-846 / DSM 112012 / S4) (Agrobacterium vitis (strain S4)), this protein is GMP synthase [glutamine-hydrolyzing].